Here is a 99-residue protein sequence, read N- to C-terminus: uncharacterized protein (99 aa).

Disordered stretches follow at residues methionine 1–threonine 24 and serine 49–threonine 99. Composition is skewed to basic residues over residues valine 15–threonine 24 and serine 71–arginine 81.

This is an uncharacterized protein from Streptomyces fradiae (Streptomyces roseoflavus).